The primary structure comprises 95 residues: Small ribosomal subunit protein uS19 (95 aa).

Residues proline 76–lysine 95 are disordered. Positions phenylalanine 80–lysine 95 are enriched in basic residues.

Belongs to the universal ribosomal protein uS19 family.

Protein S19 forms a complex with S13 that binds strongly to the 16S ribosomal RNA. The polypeptide is Small ribosomal subunit protein uS19 (Herpetosiphon aurantiacus (strain ATCC 23779 / DSM 785 / 114-95)).